We begin with the raw amino-acid sequence, 312 residues long: Acetaldehyde dehydrogenase (312 aa).

NAD(+) is bound at residue 12–15 (SGNI). Cysteine 132 acts as the Acyl-thioester intermediate in catalysis. NAD(+) is bound by residues 163–171 (SAGPGTRAN) and asparagine 290.

The protein belongs to the acetaldehyde dehydrogenase family. As to quaternary structure, heterotetramer composed of two DmpG (aldolase) and two DmpF (dehydrogenase) subunits, which allows a direct channeling of acetaldehyde between the two active sites.

It carries out the reaction acetaldehyde + NAD(+) + CoA = acetyl-CoA + NADH + H(+). The protein operates within aromatic compound metabolism; phenol degradation. With respect to regulation, is not activated by Mn(2+), Mg(2+), Ca(2+), Zn(2+) or Co(2+). Its function is as follows. Catalyzes the conversion of acetaldehyde to acetyl-CoA, using NAD(+) and coenzyme A. Can also act on propanal and butanal to form propanoyl-CoA and butanoyl-CoA, respectively. Is the final enzyme in the meta-cleavage pathway for the degradation of aromatic compounds such as phenols, cresols and catechols. NADP(+) can replace NAD(+) but the rate of reaction is much slower. In Pseudomonas sp. (strain CF600), this protein is Acetaldehyde dehydrogenase (dmpF).